A 272-amino-acid chain; its full sequence is METYAVFGNPIAHSKSPFIHQQFAQQLNIEHPYGRVLAPINDFINTLNAFFSAGGKGANVTVPFKEEAFARADELTERAALAGAVNTLKRLEDGRLLGDNTDGVGLLSDLERLSFIRPGLRILLIGAGGASRGVLLPLLSLDCAVTITNRTVFRAEELAKLFAHTGSIQALGMDKLEGHEFDLIINATSSGISGDIPAIPSSLIHPGIYCYDMFYQKGKTPFLAWCEQRGSKRNADGLGMLVAQAAHAFLLWHGVLPDVEPVIKLLQQELSA.

Residues 14 to 16 (SKS) and Thr61 each bind shikimate. Lys65 (proton acceptor) is an active-site residue. Glu77 is a binding site for NADP(+). 2 residues coordinate shikimate: Asn86 and Asp102. Residues 126-130 (GAGGA), 149-154 (NRTVFR), and Met213 contribute to the NADP(+) site. Position 215 (Tyr215) interacts with shikimate. Gly237 contacts NADP(+).

Belongs to the shikimate dehydrogenase family. Homodimer.

The enzyme catalyses shikimate + NADP(+) = 3-dehydroshikimate + NADPH + H(+). It functions in the pathway metabolic intermediate biosynthesis; chorismate biosynthesis; chorismate from D-erythrose 4-phosphate and phosphoenolpyruvate: step 4/7. Its function is as follows. Involved in the biosynthesis of the chorismate, which leads to the biosynthesis of aromatic amino acids. Catalyzes the reversible NADPH linked reduction of 3-dehydroshikimate (DHSA) to yield shikimate (SA). In Escherichia coli O127:H6 (strain E2348/69 / EPEC), this protein is Shikimate dehydrogenase (NADP(+)).